The chain runs to 192 residues: Probable GTP-binding protein EngB (192 aa).

In terms of domain architecture, EngB-type G spans 22–192 (GRPEIVFVGR…LLERLDLFSQ (171 aa)). Residues 30 to 37 (GRSNVGKS), 57 to 61 (GKTRL), 75 to 78 (DLPG), 142 to 145 (TKWD), and 172 to 174 (YSS) each bind GTP. Mg(2+) contacts are provided by S37 and T59.

This sequence belongs to the TRAFAC class TrmE-Era-EngA-EngB-Septin-like GTPase superfamily. EngB GTPase family. Requires Mg(2+) as cofactor.

In terms of biological role, necessary for normal cell division and for the maintenance of normal septation. This chain is Probable GTP-binding protein EngB, found in Chlorobaculum parvum (strain DSM 263 / NCIMB 8327) (Chlorobium vibrioforme subsp. thiosulfatophilum).